We begin with the raw amino-acid sequence, 316 residues long: Cell division protein ZipA (316 aa).

Over 1 to 5 (MQELR) the chain is Periplasmic. The chain crosses the membrane as a helical span at residues 6-26 (FVLIVVGALAIAALLFHGLWS). Residues 27–316 (SKKEGKAKFG…QIVEFNAANA (290 aa)) lie on the Cytoplasmic side of the membrane. Residues 36 to 65 (GNKPLGKLDVDQGDKDSVEQERSFAPATED) are disordered. The span at 41 to 57 (GKLDVDQGDKDSVEQER) shows a compositional bias: basic and acidic residues.

This sequence belongs to the ZipA family. In terms of assembly, interacts with FtsZ via their C-terminal domains.

Its subcellular location is the cell inner membrane. Its function is as follows. Essential cell division protein that stabilizes the FtsZ protofilaments by cross-linking them and that serves as a cytoplasmic membrane anchor for the Z ring. Also required for the recruitment to the septal ring of downstream cell division proteins. The polypeptide is Cell division protein ZipA (Vibrio parahaemolyticus serotype O3:K6 (strain RIMD 2210633)).